A 339-amino-acid chain; its full sequence is Phosphate acyltransferase (339 aa).

This sequence belongs to the PlsX family. As to quaternary structure, homodimer. Probably interacts with PlsY.

It localises to the cytoplasm. The catalysed reaction is a fatty acyl-[ACP] + phosphate = an acyl phosphate + holo-[ACP]. The protein operates within lipid metabolism; phospholipid metabolism. Catalyzes the reversible formation of acyl-phosphate (acyl-PO(4)) from acyl-[acyl-carrier-protein] (acyl-ACP). This enzyme utilizes acyl-ACP as fatty acyl donor, but not acyl-CoA. The protein is Phosphate acyltransferase of Acetivibrio thermocellus (strain ATCC 27405 / DSM 1237 / JCM 9322 / NBRC 103400 / NCIMB 10682 / NRRL B-4536 / VPI 7372) (Clostridium thermocellum).